Here is a 287-residue protein sequence, read N- to C-terminus: Ribosomal RNA small subunit methyltransferase A (287 aa).

S-adenosyl-L-methionine-binding residues include Asn-28, Leu-30, Gly-55, Glu-76, Asp-101, and Asn-125.

This sequence belongs to the class I-like SAM-binding methyltransferase superfamily. rRNA adenine N(6)-methyltransferase family. RsmA subfamily.

Its subcellular location is the cytoplasm. The catalysed reaction is adenosine(1518)/adenosine(1519) in 16S rRNA + 4 S-adenosyl-L-methionine = N(6)-dimethyladenosine(1518)/N(6)-dimethyladenosine(1519) in 16S rRNA + 4 S-adenosyl-L-homocysteine + 4 H(+). Its function is as follows. Specifically dimethylates two adjacent adenosines (A1518 and A1519) in the loop of a conserved hairpin near the 3'-end of 16S rRNA in the 30S particle. May play a critical role in biogenesis of 30S subunits. In Alkaliphilus oremlandii (strain OhILAs) (Clostridium oremlandii (strain OhILAs)), this protein is Ribosomal RNA small subunit methyltransferase A.